The following is a 392-amino-acid chain: MTSNRMQTGHPADGVYFGLMSGTSMDGVDGVAVRFEAGKPPAVLSEAFVGFADTLRDALFALQQPGGDEIEREALAANALAARYAVCCHELLRTAGLLPDDVRALGVHGQTVRHRPERGYTRQLNNAALLAELTRIDVIADFRSRDVAAGGQGAPLVPAFHATVFGSPDETRVVCNLGGISNITILPAGGGPQGEGHARNDTVRGHDCGPANALIDAWVERHLKQPFDDGGRFAARGKVDETLLAALLDEPYFRQNAPKSTGRDLFNADWLDAKLAGFQHLAPENVQATLTALTAATVADEIARHAGDCRAVYVCGGGARNPVLLDALATALAARGLDAAVATTAALGVPPQQVESLAFAWLAYRFNARAPGNVSTVTGAAGERVLGALYPR.

Residue 22–29 participates in ATP binding; the sequence is GTSMDGVD.

It belongs to the anhydro-N-acetylmuramic acid kinase family.

The catalysed reaction is 1,6-anhydro-N-acetyl-beta-muramate + ATP + H2O = N-acetyl-D-muramate 6-phosphate + ADP + H(+). It participates in amino-sugar metabolism; 1,6-anhydro-N-acetylmuramate degradation. It functions in the pathway cell wall biogenesis; peptidoglycan recycling. Catalyzes the specific phosphorylation of 1,6-anhydro-N-acetylmuramic acid (anhMurNAc) with the simultaneous cleavage of the 1,6-anhydro ring, generating MurNAc-6-P. Is required for the utilization of anhMurNAc either imported from the medium or derived from its own cell wall murein, and thus plays a role in cell wall recycling. The sequence is that of Anhydro-N-acetylmuramic acid kinase from Burkholderia mallei (strain NCTC 10229).